Consider the following 391-residue polypeptide: Processive diacylglycerol beta-glucosyltransferase (391 aa).

This sequence belongs to the glycosyltransferase 28 family. UgtP subfamily.

The protein localises to the cell membrane. It carries out the reaction a 1,2-diacyl-3-O-(beta-D-glucopyranosyl)-sn-glycerol + UDP-alpha-D-glucose = a 1,2-diacyl-3-O-(beta-D-Glc-(1-&gt;6)-beta-D-Glc)-sn-glycerol + UDP + H(+). The enzyme catalyses a 1,2-diacyl-sn-glycerol + UDP-alpha-D-glucose = a 1,2-diacyl-3-O-(beta-D-glucopyranosyl)-sn-glycerol + UDP + H(+). It participates in glycolipid metabolism; diglucosyl-diacylglycerol biosynthesis. In terms of biological role, processive glucosyltransferase involved in the biosynthesis of both the bilayer- and non-bilayer-forming membrane glucolipids. Is able to successively transfer two glucosyl residues to diacylglycerol (DAG), thereby catalyzing the formation of beta-monoglucosyl-DAG (3-O-(beta-D-glucopyranosyl)-1,2-diacyl-sn-glycerol) and beta-diglucosyl-DAG (3-O-(beta-D-glucopyranosyl-beta-(1-&gt;6)-D-glucopyranosyl)-1,2-diacyl-sn-glycerol). Beta-diglucosyl-DAG is the predominant glycolipid found in Bacillales and is also used as a membrane anchor for lipoteichoic acid (LTA). This Staphylococcus aureus (strain MW2) protein is Processive diacylglycerol beta-glucosyltransferase.